The following is an 854-amino-acid chain: MVFVECGAALKLNQCIYIGIASTICLLITQKANAQEKPVNTKNIGLITNIPRLSDIERPPTSVKDWLSQSAPTPPKIKITGVRINRTDDNFEIILETPDGEISAPETLQEGNIFIADIPNAVLALPEGKEFREDTPVDGISYVTVTQQESNNTVRVTIASSGKLPPIQVVNQSNGLTIALTPTSPDIELIVTAQKRPEDAQDVPLSLTVIPQQEIEDAQIRSFQDIANNTPNFSFLPTTAGSADFSYYSVRGLNNFNFLANQDTVGFYIDDVPFDYGGFLDVGLIDLERVEVLRGPQSTLYGRSSPAGVVNVISRPPSNQPEMRISALYGSYNNRELQLSLSDAIIPDKLAFRLAGAYNARDGVFDNTFLNKPIGERSQLTGRAQILWTPTPEWNISFNAYASDNDNGNPTFSRQNAENPFQVSQEVDGFHRLSTNTQALKISYNGDGFRATSITTRRFSNQNTLVGDNFPGDLLQQIIGINSTLWSQEFRLQSPESADRLRWLLGGYYESRNFNVLDDTFKYSDAGAVFFGLPASGSDRVSAEQNRHTYAIFGQIDYKPIAPLTLFAGWRYETADAELDRRRVFVNPDGTANPPTAEVRNATLNSDAFIPRFGLQYRFNPNLMAYATIAKGYRPSGFNYRADTEDTRRFQEETTWTYEAGLKSSWLDDRLSANLSIFQSDVDNYQVLLTDDFGFFRNVTNANVKVTGLEFELKANPLQGLDLIAGIGYVDSKFKNYRNSFTNRDFSNNRVPFAPELTYNLAVQYRSPGGIFARAELRGYGITYFDDANQVKQDPYALVNARIGYEGEKYGIYLYANNLFDTRYITSGFLFPPPNVTAGFGDPVTYGVRVSASF.

Positions 187-194 match the TonB box motif; that stretch reads IELIVTAQ. The region spanning 199–315 is the TBDR plug domain; that stretch reads DAQDVPLSLT…PAGVVNVISR (117 aa). The TBDR beta-barrel domain maps to 320–854; that stretch reads QPEMRISALY…TYGVRVSASF (535 aa). The TonB C-terminal box signature appears at 839–854; sequence GFGDPVTYGVRVSASF.

The protein belongs to the TonB-dependent receptor family.

The protein localises to the cell outer membrane. In terms of biological role, involved in the TonB-dependent uptake of copper and iron under conditions in which the concentration of copper exceeds that of the iron. The sequence is that of Iron and copper transporter IacT from Nostoc sp. (strain PCC 7120 / SAG 25.82 / UTEX 2576).